Here is a 94-residue protein sequence, read N- to C-terminus: Co-chaperonin GroES (94 aa).

Belongs to the GroES chaperonin family. Heptamer of 7 subunits arranged in a ring. Interacts with the chaperonin GroEL.

Its subcellular location is the cytoplasm. Functionally, together with the chaperonin GroEL, plays an essential role in assisting protein folding. The GroEL-GroES system forms a nano-cage that allows encapsulation of the non-native substrate proteins and provides a physical environment optimized to promote and accelerate protein folding. GroES binds to the apical surface of the GroEL ring, thereby capping the opening of the GroEL channel. This is Co-chaperonin GroES from Ehrlichia chaffeensis.